A 497-amino-acid chain; its full sequence is Lysine--tRNA ligase (497 aa).

The Mg(2+) site is built by Glu406 and Glu413.

Belongs to the class-II aminoacyl-tRNA synthetase family. In terms of assembly, homodimer. Requires Mg(2+) as cofactor.

The protein localises to the cytoplasm. It catalyses the reaction tRNA(Lys) + L-lysine + ATP = L-lysyl-tRNA(Lys) + AMP + diphosphate. This is Lysine--tRNA ligase from Rhizobium leguminosarum bv. trifolii (strain WSM2304).